Here is a 622-residue protein sequence, read N- to C-terminus: Low affinity potassium transport system protein Kup (622 aa).

Helical transmembrane passes span 9–29 (LPAV…TSPL), 49–69 (VFGF…LKYL), 101–121 (VLVI…VITP), 137–157 (PAMD…LFII), 165–185 (VGKL…VLGV), 212–232 (AVSF…EALY), 247–267 (WFTV…ALLL), 276–296 (PFFL…ATLA), 337–357 (IYIP…IVSF), 363–383 (LAAA…ILFC), 397–417 (AWVL…ANVV), and 419–439 (ILSG…IMTT).

Belongs to the HAK/KUP transporter (TC 2.A.72) family.

The protein resides in the cell inner membrane. The enzyme catalyses K(+)(in) + H(+)(in) = K(+)(out) + H(+)(out). Functionally, responsible for the low-affinity transport of potassium into the cell. Likely operates as a K(+):H(+) symporter. This chain is Low affinity potassium transport system protein Kup, found in Pectobacterium atrosepticum (strain SCRI 1043 / ATCC BAA-672) (Erwinia carotovora subsp. atroseptica).